We begin with the raw amino-acid sequence, 864 residues long: Leucine--tRNA ligase (864 aa).

Residues 42–52 (PYPSGKLHMGH) carry the 'HIGH' region motif. The 'KMSKS' region motif lies at 624–628 (KMSKS). K627 contacts ATP.

Belongs to the class-I aminoacyl-tRNA synthetase family.

It localises to the cytoplasm. It catalyses the reaction tRNA(Leu) + L-leucine + ATP = L-leucyl-tRNA(Leu) + AMP + diphosphate. This Burkholderia mallei (strain NCTC 10229) protein is Leucine--tRNA ligase.